A 333-amino-acid polypeptide reads, in one-letter code: G-protein coupled receptor 146 (333 aa).

At 1–22 (MWSCGPLNSTAWAEEPLCRNLR) the chain is on the extracellular side. Asn8 is a glycosylation site (N-linked (GlcNAc...) asparagine). The helical transmembrane segment at 23–43 (LGLWVLSLLYLGAGVPVSLGY) threads the bilayer. Topologically, residues 44-64 (NALLVLANLASKNTMTMPDVY) are cytoplasmic. A helical transmembrane segment spans residues 65–85 (FVNMAVAGLVLTALAPAYLLG). The Extracellular segment spans residues 86 to 101 (PAHSRWALWSLSSEAH). The helical transmembrane segment at 102 to 122 (VTLLILFNVASLVTMYSTALL) threads the bilayer. Residues 123-145 (SLDYYIERALPRTYMASVYNTRH) lie on the Cytoplasmic side of the membrane. A helical membrane pass occupies residues 146 to 166 (VCGFVWGGAVLTSFSSLLFYI). Residues 167–188 (CSHVSSRIAECARMQNTEAADA) lie on the Extracellular side of the membrane. The helical transmembrane segment at 189 to 209 (ILVLIGYVVPGLAVLYALALI) threads the bilayer. At 210–232 (SRIGKEDTPLDQDTSRLDPSVHR) the chain is on the cytoplasmic side. Residues 233–253 (LLVATVCTQFGLWTPYYLSLG) traverse the membrane as a helical segment. At 254 to 277 (HTVLTSRGRTVEGHYLGILQVAKD) the chain is on the extracellular side. Residues 278–298 (LAKFLAFSSSSVTPLLYRYIN) traverse the membrane as a helical segment. The Cytoplasmic segment spans residues 299-333 (KAFPGKLRRLMKKMHCGRRHCSPDPSGIQQVMAQA).

The protein belongs to the G-protein coupled receptor 1 family.

The protein resides in the cell membrane. Its function is as follows. GPCR receptor required for the regulation of plasma cholesterol levels. Receptor for CHLSN, a gut derived hormone which mediates an inhibitory effect of intestinal cholesterol absorption on hepatic cholesterol synthesis. Cholesin-binding exerts an antagonistic effect by inhibiting PKA signaling and suppressing SREBF2-controlled cholesterol in the liver. The polypeptide is G-protein coupled receptor 146 (Gpr146) (Mus musculus (Mouse)).